Consider the following 156-residue polypeptide: tRNA (cytidine(34)-2'-O)-methyltransferase (156 aa).

Positions 102, 124, and 132 each coordinate S-adenosyl-L-methionine.

This sequence belongs to the class IV-like SAM-binding methyltransferase superfamily. RNA methyltransferase TrmH family. TrmL subfamily. Homodimer.

It localises to the cytoplasm. The catalysed reaction is cytidine(34) in tRNA + S-adenosyl-L-methionine = 2'-O-methylcytidine(34) in tRNA + S-adenosyl-L-homocysteine + H(+). The enzyme catalyses 5-carboxymethylaminomethyluridine(34) in tRNA(Leu) + S-adenosyl-L-methionine = 5-carboxymethylaminomethyl-2'-O-methyluridine(34) in tRNA(Leu) + S-adenosyl-L-homocysteine + H(+). Methylates the ribose at the nucleotide 34 wobble position in the two leucyl isoacceptors tRNA(Leu)(CmAA) and tRNA(Leu)(cmnm5UmAA). Catalyzes the methyl transfer from S-adenosyl-L-methionine to the 2'-OH of the wobble nucleotide. This chain is tRNA (cytidine(34)-2'-O)-methyltransferase, found in Burkholderia cenocepacia (strain HI2424).